Here is a 183-residue protein sequence, read N- to C-terminus: 2-C-methyl-D-erythritol 2,4-cyclodiphosphate synthase (183 aa).

2 residues coordinate a divalent metal cation: aspartate 10 and histidine 12. 4-CDP-2-C-methyl-D-erythritol 2-phosphate is bound by residues 10–12 (DVH) and 38–39 (HS). Position 46 (histidine 46) interacts with a divalent metal cation. 4-CDP-2-C-methyl-D-erythritol 2-phosphate is bound by residues 60–62 (DIG) and 65–69 (FPDTD).

This sequence belongs to the IspF family. In terms of assembly, homotrimer. The cofactor is a divalent metal cation.

It carries out the reaction 4-CDP-2-C-methyl-D-erythritol 2-phosphate = 2-C-methyl-D-erythritol 2,4-cyclic diphosphate + CMP. It participates in isoprenoid biosynthesis; isopentenyl diphosphate biosynthesis via DXP pathway; isopentenyl diphosphate from 1-deoxy-D-xylulose 5-phosphate: step 4/6. Involved in the biosynthesis of isopentenyl diphosphate (IPP) and dimethylallyl diphosphate (DMAPP), two major building blocks of isoprenoid compounds. Catalyzes the conversion of 4-diphosphocytidyl-2-C-methyl-D-erythritol 2-phosphate (CDP-ME2P) to 2-C-methyl-D-erythritol 2,4-cyclodiphosphate (ME-CPP) with a corresponding release of cytidine 5-monophosphate (CMP). The polypeptide is 2-C-methyl-D-erythritol 2,4-cyclodiphosphate synthase (Verminephrobacter eiseniae (strain EF01-2)).